Reading from the N-terminus, the 238-residue chain is tRNA1(Val) (adenine(37)-N6)-methyltransferase (238 aa).

It belongs to the methyltransferase superfamily. tRNA (adenine-N(6)-)-methyltransferase family.

It is found in the cytoplasm. The catalysed reaction is adenosine(37) in tRNA1(Val) + S-adenosyl-L-methionine = N(6)-methyladenosine(37) in tRNA1(Val) + S-adenosyl-L-homocysteine + H(+). Functionally, specifically methylates the adenine in position 37 of tRNA(1)(Val) (anticodon cmo5UAC). The polypeptide is tRNA1(Val) (adenine(37)-N6)-methyltransferase (Shewanella sp. (strain W3-18-1)).